The primary structure comprises 158 residues: 2-C-methyl-D-erythritol 2,4-cyclodiphosphate synthase (158 aa).

The a divalent metal cation site is built by Asp-8 and His-10. 4-CDP-2-C-methyl-D-erythritol 2-phosphate is bound by residues 8 to 10 (DVH) and 34 to 35 (HS). His-42 contacts a divalent metal cation. Residues 56 to 58 (DIG), 61 to 65 (FPDDD), 132 to 135 (TTFE), and Phe-139 each bind 4-CDP-2-C-methyl-D-erythritol 2-phosphate.

Belongs to the IspF family. Homotrimer. Requires a divalent metal cation as cofactor.

It carries out the reaction 4-CDP-2-C-methyl-D-erythritol 2-phosphate = 2-C-methyl-D-erythritol 2,4-cyclic diphosphate + CMP. Its pathway is isoprenoid biosynthesis; isopentenyl diphosphate biosynthesis via DXP pathway; isopentenyl diphosphate from 1-deoxy-D-xylulose 5-phosphate: step 4/6. Its function is as follows. Involved in the biosynthesis of isopentenyl diphosphate (IPP) and dimethylallyl diphosphate (DMAPP), two major building blocks of isoprenoid compounds. Catalyzes the conversion of 4-diphosphocytidyl-2-C-methyl-D-erythritol 2-phosphate (CDP-ME2P) to 2-C-methyl-D-erythritol 2,4-cyclodiphosphate (ME-CPP) with a corresponding release of cytidine 5-monophosphate (CMP). This Natranaerobius thermophilus (strain ATCC BAA-1301 / DSM 18059 / JW/NM-WN-LF) protein is 2-C-methyl-D-erythritol 2,4-cyclodiphosphate synthase.